We begin with the raw amino-acid sequence, 95 residues long: MQYTVLIPLFIFIGAMVLFGFSFQKKQPQRRIVQILFLAYCVDFLALIIAVMMLTFLSYDDLMLGVLIPVLILSIIMFFVMIIAHYPLMKRLFGH.

A run of 3 helical transmembrane segments spans residues 3-23 (YTVL…GFSF), 35-55 (ILFL…MMLT), and 63-83 (MLGV…VMII).

Its subcellular location is the cell membrane. This is an uncharacterized protein from Mycoplasma pneumoniae (strain ATCC 29342 / M129 / Subtype 1) (Mycoplasmoides pneumoniae).